Consider the following 129-residue polypeptide: Large ribosomal subunit protein bL17 (129 aa).

The protein belongs to the bacterial ribosomal protein bL17 family. As to quaternary structure, part of the 50S ribosomal subunit. Contacts protein L32.

This is Large ribosomal subunit protein bL17 from Polynucleobacter asymbioticus (strain DSM 18221 / CIP 109841 / QLW-P1DMWA-1) (Polynucleobacter necessarius subsp. asymbioticus).